We begin with the raw amino-acid sequence, 272 residues long: Centromere protein V-like protein 1 (272 aa).

A compositionally biased stretch (basic residues) spans 1–17 (MGRVRNRATAQRRRRKR). Disordered stretches follow at residues 1–23 (MGRV…DPPA) and 65–95 (RRVR…KDLD). Residues 79–90 (APTPDPPGPAPS) are compositionally biased toward pro residues. The 114-residue stretch at 133–246 (HTGGCHCGAV…EEVGGGDPGE (114 aa)) folds into the CENP-V/GFA domain. C137, C139, C157, C159, C162, C201, and C204 together coordinate Zn(2+). Residues 240 to 272 (GGGDPGEEAAEEHKAIHKTSSQSAPACPREQEQ) form a disordered region.

This sequence belongs to the Gfa family. Requires Zn(2+) as cofactor.

The chain is Centromere protein V-like protein 1 from Homo sapiens (Human).